We begin with the raw amino-acid sequence, 348 residues long: Uroporphyrinogen decarboxylase (348 aa).

Substrate contacts are provided by residues 23 to 27, D72, Y148, S203, and H316; that span reads RQAGR.

The protein belongs to the uroporphyrinogen decarboxylase family. As to quaternary structure, homodimer.

Its subcellular location is the cytoplasm. It carries out the reaction uroporphyrinogen III + 4 H(+) = coproporphyrinogen III + 4 CO2. It participates in porphyrin-containing compound metabolism; protoporphyrin-IX biosynthesis; coproporphyrinogen-III from 5-aminolevulinate: step 4/4. Catalyzes the decarboxylation of four acetate groups of uroporphyrinogen-III to yield coproporphyrinogen-III. The sequence is that of Uroporphyrinogen decarboxylase from Myxococcus xanthus (strain DK1622).